A 305-amino-acid polypeptide reads, in one-letter code: N-acetylneuraminate lyase A (305 aa).

Positions 51 and 52 each coordinate aceneuramate. Residue tyrosine 143 is the Proton donor of the active site. Catalysis depends on lysine 173, which acts as the Schiff-base intermediate with substrate. Aceneuramate-binding residues include serine 175, glycine 197, aspartate 199, glutamate 200, and serine 216.

This sequence belongs to the DapA family. NanA subfamily. In terms of assembly, homotetramer.

The protein resides in the cytoplasm. It carries out the reaction aceneuramate = aldehydo-N-acetyl-D-mannosamine + pyruvate. Its pathway is amino-sugar metabolism; N-acetylneuraminate degradation. In terms of biological role, catalyzes the cleavage of N-acetylneuraminic acid (sialic acid) to form pyruvate and N-acetylmannosamine via a Schiff base intermediate. It prevents sialic acids from being recycled and returning to the cell surface. Involved in the N-glycolylneuraminic acid (Neu5Gc) degradation pathway. The chain is N-acetylneuraminate lyase A (npl-a) from Xenopus laevis (African clawed frog).